Reading from the N-terminus, the 344-residue chain is L-rhamnose-proton symporter (344 aa).

Transmembrane regions (helical) follow at residues 4 to 24 (AITM…CFYA), 38 to 58 (WSVG…ALLL), 68 to 88 (FNLS…IGNI), 101 to 121 (MGIG…TPII), 137 to 157 (TLLG…AGQL), 175 to 195 (LLLA…MNAA), 214 to 234 (LPSY…FCFI), 259 to 279 (ILLS…YAWG), 290 to 310 (MSWM…GLVL), and 321 to 341 (VAVL…VGLG).

The protein belongs to the L-rhamnose transporter (TC 2.A.7.6) family.

The protein resides in the cell inner membrane. The catalysed reaction is L-rhamnopyranose(in) + H(+)(in) = L-rhamnopyranose(out) + H(+)(out). Functionally, uptake of L-rhamnose across the cytoplasmic membrane with the concomitant transport of protons into the cell (symport system). This Salmonella gallinarum (strain 287/91 / NCTC 13346) protein is L-rhamnose-proton symporter.